The following is a 460-amino-acid chain: Argininosuccinate lyase (460 aa).

Belongs to the lyase 1 family. Argininosuccinate lyase subfamily.

The protein resides in the cytoplasm. The enzyme catalyses 2-(N(omega)-L-arginino)succinate = fumarate + L-arginine. The protein operates within amino-acid biosynthesis; L-arginine biosynthesis; L-arginine from L-ornithine and carbamoyl phosphate: step 3/3. The sequence is that of Argininosuccinate lyase from Desulforamulus reducens (strain ATCC BAA-1160 / DSM 100696 / MI-1) (Desulfotomaculum reducens).